Consider the following 283-residue polypeptide: Pantothenate synthetase (283 aa).

ATP is bound at residue 30–37 (MGNLHAGH). His37 acts as the Proton donor in catalysis. Gln61 contributes to the (R)-pantoate binding site. Gln61 is a beta-alanine binding site. Position 149-152 (149-152 (GEKD)) interacts with ATP. A (R)-pantoate-binding site is contributed by Gln155. Residues Val178 and 186–189 (LSSR) each bind ATP.

The protein belongs to the pantothenate synthetase family. As to quaternary structure, homodimer.

It is found in the cytoplasm. The enzyme catalyses (R)-pantoate + beta-alanine + ATP = (R)-pantothenate + AMP + diphosphate + H(+). It participates in cofactor biosynthesis; (R)-pantothenate biosynthesis; (R)-pantothenate from (R)-pantoate and beta-alanine: step 1/1. Functionally, catalyzes the condensation of pantoate with beta-alanine in an ATP-dependent reaction via a pantoyl-adenylate intermediate. This chain is Pantothenate synthetase, found in Azotobacter vinelandii (strain DJ / ATCC BAA-1303).